The chain runs to 1191 residues: Homeodomain-interacting protein kinase 3 (1191 aa).

Lys27 participates in a covalent cross-link: Glycyl lysine isopeptide (Lys-Gly) (interchain with G-Cter in SUMO2). Residues Tyr197 to Val525 form the Protein kinase domain. ATP is bound by residues Leu203–Val211 and Lys226. The active-site Proton acceptor is Asp322. Tyr359 carries the phosphotyrosine modification. Residues Gln766–Ser920 form an interaction with AR region. Residues Asn774–Lys867 form an interaction with FAS region. Residues Thr801–Lys828 form a disordered region. Over residues Gln802–Lys828 the composition is skewed to basic and acidic residues. The interaction with UBL1 stretch occupies residues Ile846 to Glu856. A compositionally biased stretch (low complexity) spans Ser888 to Ser905. 2 disordered regions span residues Ser888–Gly960 and Thr993–Ser1022. Residues Asn1008 to Ser1022 show a composition bias toward polar residues.

This sequence belongs to the protein kinase superfamily. CMGC Ser/Thr protein kinase family. HIPK subfamily. Interacts with Nkx1-2. Interacts with FAS and DAXX. Probably part of a complex consisting of HIPK3, FAS and FADD. Interacts with UBL1/SUMO-1. Interacts with and stabilizes ligand-bound androgen receptor (AR). Autophosphorylated. Autophosphorylation is not required for catalytic activity. In terms of processing, may be sumoylated.

Its subcellular location is the nucleus. The enzyme catalyses L-seryl-[protein] + ATP = O-phospho-L-seryl-[protein] + ADP + H(+). The catalysed reaction is L-threonyl-[protein] + ATP = O-phospho-L-threonyl-[protein] + ADP + H(+). In terms of biological role, seems to negatively regulate apoptosis by promoting FADD phosphorylation. Enhances androgen receptor-mediated transcription. May act as a transcriptional corepressor for NK homeodomain transcription factors. This is Homeodomain-interacting protein kinase 3 (Hipk3) from Rattus norvegicus (Rat).